Consider the following 203-residue polypeptide: Probable flagellin 1 (203 aa).

Positions 1–6 (MRRRRG) are excised as a propeptide.

This sequence belongs to the archaeal flagellin family.

The protein localises to the archaeal flagellum. Functionally, flagellin is the subunit protein which polymerizes to form the filaments of archaeal flagella. The polypeptide is Probable flagellin 1 (flaB1) (Aeropyrum pernix (strain ATCC 700893 / DSM 11879 / JCM 9820 / NBRC 100138 / K1)).